A 149-amino-acid polypeptide reads, in one-letter code: Urease accessory protein UreE (149 aa).

This sequence belongs to the UreE family.

The protein resides in the cytoplasm. Functionally, involved in urease metallocenter assembly. Binds nickel. Probably functions as a nickel donor during metallocenter assembly. This Prochlorococcus marinus (strain MIT 9301) protein is Urease accessory protein UreE.